A 286-amino-acid polypeptide reads, in one-letter code: Undecaprenyl-diphosphatase (286 aa).

7 consecutive transmembrane segments (helical) span residues 50 to 70 (PGVS…IAYF), 97 to 117 (LGIA…AIKL), 127 to 147 (LRSV…LALA), 165 to 185 (GLLV…RSGS), 200 to 220 (AARF…LVEL), 230 to 250 (GGVL…WLAI), and 262 to 282 (TWVF…WWAG).

This sequence belongs to the UppP family.

It is found in the cell inner membrane. The catalysed reaction is di-trans,octa-cis-undecaprenyl diphosphate + H2O = di-trans,octa-cis-undecaprenyl phosphate + phosphate + H(+). Catalyzes the dephosphorylation of undecaprenyl diphosphate (UPP). Confers resistance to bacitracin. The chain is Undecaprenyl-diphosphatase from Synechococcus sp. (strain WH7803).